The primary structure comprises 314 residues: Methionyl-tRNA formyltransferase (314 aa).

111 to 114 (SLLP) lines the (6S)-5,6,7,8-tetrahydrofolate pocket.

This sequence belongs to the Fmt family.

The catalysed reaction is L-methionyl-tRNA(fMet) + (6R)-10-formyltetrahydrofolate = N-formyl-L-methionyl-tRNA(fMet) + (6S)-5,6,7,8-tetrahydrofolate + H(+). In terms of biological role, attaches a formyl group to the free amino group of methionyl-tRNA(fMet). The formyl group appears to play a dual role in the initiator identity of N-formylmethionyl-tRNA by promoting its recognition by IF2 and preventing the misappropriation of this tRNA by the elongation apparatus. The sequence is that of Methionyl-tRNA formyltransferase from Coxiella burnetii (strain CbuK_Q154) (Coxiella burnetii (strain Q154)).